The chain runs to 3948 residues: Hybrid PKS-NRPS synthetase fsa1 (3948 aa).

The region spanning 4 to 438 (SEPIAVIGSA…GTNAHAIIEA (435 aa)) is the Ketosynthase family 3 (KS3) domain. Catalysis depends on for beta-ketoacyl synthase activity residues Cys177, His316, and His358. The segment at 543-846 (IFTGQGTQWP…LDTIEAISEG (304 aa)) is malonyl-CoA:ACP transacylase (MAT) domain. The interval 931-1066 (HPLLGRRCHD…AQIKASLGTP (136 aa)) is N-terminal hotdog fold. The dehydratase (DH) domain stretch occupies residues 931–1233 (HPLLGRRCHD…MELVPFSPAT (303 aa)). A PKS/mFAS DH domain is found at 931 to 1235 (HPLLGRRCHD…LVPFSPATPA (305 aa)). Residue His964 is the Proton acceptor; for dehydratase activity of the active site. The interval 1081–1235 (LRPVSVDRFY…LVPFSPATPA (155 aa)) is C-terminal hotdog fold. Residue Asp1141 is the Proton donor; for dehydratase activity of the active site. A methyltransferase (MT) domain region spans residues 1381-1578 (YEQGFGLNLV…TTPPVHKILP (198 aa)). Residues 2105–2277 (TFLLIGLTGE…VAASSIDISS (173 aa)) are ketoreductase (KR) domain. A Carrier 1 domain is found at 2389–2464 (AIIKESFIVR…DLVDESLDLL (76 aa)). The residue at position 2424 (Ser2424) is an O-(pantetheine 4'-phosphoryl)serine. The segment at 2475–2555 (EAGNAHPAKP…TDNLTPPRTF (81 aa)) is disordered. 2 stretches are compositionally biased toward polar residues: residues 2487 to 2505 (VIPQ…QGTS) and 2513 to 2528 (GSDS…LTSW). Positions 2529 to 2541 (DRQDLSPPDKSDD) are enriched in basic and acidic residues. Polar residues predominate over residues 2542–2551 (APNSTDNLTP). A condensation (C) domain region spans residues 2547-2976 (DNLTPPRTFP…TQVLLRSYLS (430 aa)). The segment at 3000–3402 (LKVAVDAGKA…PDTFFGTSGT (403 aa)) is adenylation (A) (KR) domain. The region spanning 3540–3617 (KSLTASEKRL…AMASVLEDCG (78 aa)) is the Carrier 2 domain. Position 3577 is an O-(pantetheine 4'-phosphoryl)serine (Ser3577). The segment at 3653–3870 (LTGSSGYLGR…MPVNEIVEAI (218 aa)) is reductase (RED) domain.

This sequence in the C-terminal section; belongs to the NRP synthetase family.

The catalysed reaction is L-serine + 7 malonyl-CoA + acetyl-CoA + 2 S-adenosyl-L-methionine + ATP + 8 NADPH + 11 H(+) = (5S)-3-[(2E,6R,8E,10E,12E)-2,6-dimethyltetradeca-2,8,10,12-tetraenoyl]-5-(hydroxymethyl)pyrrolidine-2,4-dione + AMP + 2 S-adenosyl-L-homocysteine + 7 CO2 + diphosphate + 8 NADP(+) + 8 CoA + 6 H2O. It participates in mycotoxin biosynthesis. Functionally, hybrid PKS-NRPS synthetase; part of the gene cluster that mediates the biosynthesis of HIV-1 integrase inhibitor equisetin and of fusarisetin A, both trans-fused decalin-containing tetramic acids showing also antimicrobial activity. The PKS module of fsa1 together with the enoylreductase fsa3 catalyze the formation of the polyketide unit which is then conjugated to L-serine by the condensation domain of the fsa1 NRPS module. Activity of the Dieckmann cyclase domain (RED) results in release of the Dieckmann product intermediate. Diels-Alderase fsa2 is involved in endo-selective Diels-Alder cycloaddition to form the decalin ring, leading to the production of N-desmethylequisetin also called trichosetin. Subsequent N-methylation is carried out by fsa4 to give equisetin. The enzymatic gene responsible for the conversion of equisetin to fusarisetin A has not been identified yet and is probably located outside of the fsa cluster. The sequence is that of Hybrid PKS-NRPS synthetase fsa1 from Fusarium sp. (strain FN080326).